Here is a 358-residue protein sequence, read N- to C-terminus: Methylthioribose-1-phosphate isomerase (358 aa).

Residues 54–56 (RGA), Arg-96, and Gln-205 contribute to the substrate site. Catalysis depends on Asp-246, which acts as the Proton donor. 256 to 257 (AK) is a binding site for substrate.

It belongs to the eIF-2B alpha/beta/delta subunits family. MtnA subfamily.

It carries out the reaction 5-(methylsulfanyl)-alpha-D-ribose 1-phosphate = 5-(methylsulfanyl)-D-ribulose 1-phosphate. Its pathway is amino-acid biosynthesis; L-methionine biosynthesis via salvage pathway; L-methionine from S-methyl-5-thio-alpha-D-ribose 1-phosphate: step 1/6. Catalyzes the interconversion of methylthioribose-1-phosphate (MTR-1-P) into methylthioribulose-1-phosphate (MTRu-1-P). The chain is Methylthioribose-1-phosphate isomerase from Pseudomonas entomophila (strain L48).